We begin with the raw amino-acid sequence, 63 residues long: Large ribosomal subunit protein uL29 (63 aa).

It belongs to the universal ribosomal protein uL29 family.

The sequence is that of Large ribosomal subunit protein uL29 from Caulobacter vibrioides (strain ATCC 19089 / CIP 103742 / CB 15) (Caulobacter crescentus).